The chain runs to 561 residues: Proline--tRNA ligase (561 aa).

The protein belongs to the class-II aminoacyl-tRNA synthetase family. ProS type 1 subfamily. Homodimer.

The protein localises to the cytoplasm. The catalysed reaction is tRNA(Pro) + L-proline + ATP = L-prolyl-tRNA(Pro) + AMP + diphosphate. Catalyzes the attachment of proline to tRNA(Pro) in a two-step reaction: proline is first activated by ATP to form Pro-AMP and then transferred to the acceptor end of tRNA(Pro). As ProRS can inadvertently accommodate and process non-cognate amino acids such as alanine and cysteine, to avoid such errors it has two additional distinct editing activities against alanine. One activity is designated as 'pretransfer' editing and involves the tRNA(Pro)-independent hydrolysis of activated Ala-AMP. The other activity is designated 'posttransfer' editing and involves deacylation of mischarged Ala-tRNA(Pro). The misacylated Cys-tRNA(Pro) is not edited by ProRS. This is Proline--tRNA ligase from Thermosipho africanus (strain TCF52B).